Reading from the N-terminus, the 202-residue chain is Potassium-transporting ATPase KdpC subunit (202 aa).

Residues 7 to 27 (PAIFVLLALTLITGLLYPLAM) traverse the membrane as a helical segment. The segment at 66-103 (FHGRPSATSTADPNDSTKTVPAPYNAANSSGSNLGPTS) is disordered. Polar residues-rich tracts occupy residues 71–84 (SATS…STKT) and 91–101 (AANSSGSNLGP).

This sequence belongs to the KdpC family. As to quaternary structure, the system is composed of three essential subunits: KdpA, KdpB and KdpC.

It localises to the cell inner membrane. Functionally, part of the high-affinity ATP-driven potassium transport (or Kdp) system, which catalyzes the hydrolysis of ATP coupled with the electrogenic transport of potassium into the cytoplasm. This subunit acts as a catalytic chaperone that increases the ATP-binding affinity of the ATP-hydrolyzing subunit KdpB by the formation of a transient KdpB/KdpC/ATP ternary complex. This is Potassium-transporting ATPase KdpC subunit from Bradyrhizobium sp. (strain ORS 278).